Here is a 790-residue protein sequence, read N- to C-terminus: Vacuolar protein sorting-associated protein 35B (790 aa).

The protein belongs to the VPS35 family. Component of the retromer complex which consists of VPS29 (MAG1), VPS26 (VPS26A or VPS26B), VPS35 (VPS35A or VPS35B or VPS35C), VPS5/17 (SNX1 or SNX2A or SNX2B). Component of a retromer subcomplex consisting of VPS29 (MAG1), VPS26 (VPS26A or VPS26B), VPS35 (VPS35A or VPS35B or VPS35C). Expressed in siliques and maturing seeds (at protein level).

It is found in the cytoplasm. Its subcellular location is the endosome membrane. The protein localises to the prevacuolar compartment membrane. The protein resides in the golgi apparatus. It localises to the trans-Golgi network membrane. Functionally, plays a role in vesicular protein sorting. Component of the membrane-associated retromer complex which is essential in endosome-to-Golgi retrograde transport. Also involved in the efficient sorting of seed storage proteins globulin 12S and albumin 2S. The VPS29-VPS26-VPS35 subcomplex may be involved in recycling of specific cargos from endosome to the plasma membrane. The protein is Vacuolar protein sorting-associated protein 35B (VPS35B) of Arabidopsis thaliana (Mouse-ear cress).